The chain runs to 436 residues: tRNA(Ile)-lysidine synthase (436 aa).

27 to 32 serves as a coordination point for ATP; it reads SGGVDS.

Belongs to the tRNA(Ile)-lysidine synthase family.

The protein localises to the cytoplasm. The catalysed reaction is cytidine(34) in tRNA(Ile2) + L-lysine + ATP = lysidine(34) in tRNA(Ile2) + AMP + diphosphate + H(+). In terms of biological role, ligates lysine onto the cytidine present at position 34 of the AUA codon-specific tRNA(Ile) that contains the anticodon CAU, in an ATP-dependent manner. Cytidine is converted to lysidine, thus changing the amino acid specificity of the tRNA from methionine to isoleucine. This Vibrio vulnificus (strain CMCP6) protein is tRNA(Ile)-lysidine synthase.